Reading from the N-terminus, the 286-residue chain is Aldo-keto reductase MAV_4483 (286 aa).

The active-site Proton donor is the Y61. Residues L201, V203, V239, R241, S242, R247, and N251 each contribute to the NADPH site.

It belongs to the aldo/keto reductase family.

This Mycobacterium avium (strain 104) protein is Aldo-keto reductase MAV_4483.